A 1684-amino-acid polypeptide reads, in one-letter code: Protein Wiz (1684 aa).

Residues 1-77 (MEGLLAGGLA…PGLSEALPRA (77 aa)) form a disordered region. The segment covering 13–24 (DHPRGPAPREDI) has biased composition (basic and acidic residues). C2H2-type zinc fingers lie at residues 308–330 (FPCI…MSQH), 345–367 (LACS…WQLH), 454–477 (NTCV…RLVH), 734–756 (RKCP…VRGH), and 802–824 (MRCD…ARAH). The disordered stretch occupies residues 854-876 (LPPSPLGREPGGPPRSFLTSRRP). The C2H2-type 6 zinc finger occupies 903 to 925 (TTCEVCGACFETRKGLSSHARSH). Residues Lys916, Lys972, Lys988, Lys1000, and Lys1021 each participate in a glycyl lysine isopeptide (Lys-Gly) (interchain with G-Cter in SUMO2) cross-link. Residues 1005–1072 (FSAKGLTHPS…PLNLTSGPEP (68 aa)) are disordered. Position 1029 is a phosphoserine (Ser1029). A Phosphothreonine modification is found at Thr1031. Glycyl lysine isopeptide (Lys-Gly) (interchain with G-Cter in SUMO2) cross-links involve residues Lys1033 and Lys1038. A phosphoserine mark is found at Ser1039 and Ser1045. Residues 1040–1057 (PQLSLSPRPTSPKAQWPQ) are compositionally biased toward polar residues. Residue Thr1049 is modified to Phosphothreonine. Ser1050 and Ser1058 each carry phosphoserine. An interaction with CTBP1 and CTBP2 1 region spans residues 1063 to 1067 (PLNLT). Residues 1076–1098 (IRCEFCGEFFENRKGLSSHARSH) form a C2H2-type 7 zinc finger. Lys1089 is covalently cross-linked (Glycyl lysine isopeptide (Lys-Gly) (interchain with G-Cter in SUMO2)). 2 positions are modified to phosphoserine: Ser1112 and Ser1139. Positions 1127-1208 (SRPGGHLHPP…GLATPSLPKK (82 aa)) are disordered. Glycyl lysine isopeptide (Lys-Gly) (interchain with G-Cter in SUMO2) cross-links involve residues Lys1141 and Lys1145. Ser1155, Ser1160, and Ser1167 each carry phosphoserine. Residues Lys1171 and Lys1172 each participate in a glycyl lysine isopeptide (Lys-Gly) (interchain with G-Cter in SUMO2) cross-link. Residues Ser1179 and Ser1184 each carry the phosphoserine modification. Lys1195 is modified (N6,N6,N6-trimethyllysine; by EHMT2; alternate). At Lys1195 the chain carries N6,N6-dimethyllysine; by EHMT2; alternate. A Glycyl lysine isopeptide (Lys-Gly) (interchain with G-Cter in SUMO2) cross-link involves residue Lys1210. The interval 1247-1251 (PLNLS) is interaction with CTBP1 and CTBP2 2. The C2H2-type 8 zinc-finger motif lies at 1260–1282 (IRCEFCGEFFENRKGLSSHARSH). Lys1273 is covalently cross-linked (Glycyl lysine isopeptide (Lys-Gly) (interchain with G-Cter in SUMO2)). Ser1296 carries the phosphoserine modification. Lys1315 is covalently cross-linked (Glycyl lysine isopeptide (Lys-Gly) (interchain with G-Cter in SUMO2)). The segment at 1320-1384 (AGDLAPALTE…SKPSAASYLG (65 aa)) is disordered. Residues 1335-1351 (AAPGALHSPLPLSPLAS) are compositionally biased toward low complexity. Phosphoserine is present on residues Ser1342 and Ser1347. Residues Lys1376, Lys1389, Lys1403, Lys1405, and Lys1415 each participate in a glycyl lysine isopeptide (Lys-Gly) (interchain with G-Cter in SUMO2) cross-link. The C2H2-type 9 zinc finger occupies 1430–1452 (ACCELCGLYFENRKALASHARAH). Residues Lys1481, Lys1497, and Lys1510 each participate in a glycyl lysine isopeptide (Lys-Gly) (interchain with G-Cter in SUMO2) cross-link. Disordered regions lie at residues 1496-1587 (TKKF…GEEV) and 1592-1611 (QKLE…PSLV). Ser1550 carries the phosphoserine modification. Residue Lys1556 forms a Glycyl lysine isopeptide (Lys-Gly) (interchain with G-Cter in SUMO1); alternate linkage. A Glycyl lysine isopeptide (Lys-Gly) (interchain with G-Cter in SUMO2); alternate cross-link involves residue Lys1556. Basic and acidic residues predominate over residues 1556–1574 (KSEEHQRQNINKFERRQAR). Glycyl lysine isopeptide (Lys-Gly) (interchain with G-Cter in SUMO2) cross-links involve residues Lys1567 and Lys1593. Over residues 1599–1611 (QPPPRVRPVPSLV) the composition is skewed to pro residues. The C2H2-type 10 zinc-finger motif lies at 1629 to 1655 (LKCRFCEVEFQGPLSIQEEWVRHLQRH). Positions 1662–1684 (SKADPPPEEPQAPQAQTAAVEAP) are disordered. A Glycyl lysine isopeptide (Lys-Gly) (interchain with G-Cter in SUMO2) cross-link involves residue Lys1663. Low complexity predominate over residues 1672-1684 (QAPQAQTAAVEAP).

Belongs to the krueppel C2H2-type zinc-finger protein family. In terms of assembly, part of a complex containing at least CDYL, REST, WIZ, SETB1, EHMT1 and EHMT2. Interacts with EHMT1, EHMT2, CTBP1 and CTBP2. In terms of tissue distribution, according to PubMed:9795207, isoform L and isoform S are brain-specific. According to PubMed:16702210, isoform S is ubiquitously expressed.

The protein localises to the nucleus. Functionally, may link EHMT1 and EHMT2 histone methyltransferases to the CTBP corepressor machinery. May be involved in EHMT1-EHMT2 heterodimer formation and stabilization. The polypeptide is Protein Wiz (Wiz) (Mus musculus (Mouse)).